A 273-amino-acid chain; its full sequence is MLITETFHDVQTSYGTTLRIYVYSPKIAGYPQAKFPGVILYSEIYQVTGPVRRFGQRIASEGYVVVAPAIYHNFMGPEALPYDVQGTDIGNEYKIKKPLESYDEDNKLCCDLLFQLPQFDGKRIGSTGMCLGGHLAFRALLDKRVTCATCFFPTDIHSRTLGLGQNDNSLERVSKELGNNQEMVLIFGTADTHVDPQGRDLIRKTLRDHGVKFTFLEILAAQHAFIRDEFSKGRFDSAITQSCLGFLFEQFNRKLRIDLGEFVDDNTPLEHVC.

Residues Cys-130, Asp-191, and His-223 contribute to the active site.

This sequence belongs to the dienelactone hydrolase family.

It carries out the reaction 2-(5-oxo-2,5-dihydrofuran-2-ylidene)acetate + H2O = 4-oxohex-2-enedioate + H(+). This is Putative carboxymethylenebutenolidase from Saccharomyces cerevisiae (strain ATCC 204508 / S288c) (Baker's yeast).